The primary structure comprises 147 residues: 3-dehydroquinate dehydratase (147 aa).

The active-site Proton acceptor is the Y24. Substrate-binding residues include N75, H81, and D88. H101 acts as the Proton donor in catalysis. Substrate is bound by residues 102-103 (LS) and R112.

It belongs to the type-II 3-dehydroquinase family. Homododecamer.

It carries out the reaction 3-dehydroquinate = 3-dehydroshikimate + H2O. It participates in metabolic intermediate biosynthesis; chorismate biosynthesis; chorismate from D-erythrose 4-phosphate and phosphoenolpyruvate: step 3/7. Functionally, catalyzes a trans-dehydration via an enolate intermediate. This Caulobacter sp. (strain K31) protein is 3-dehydroquinate dehydratase.